A 180-amino-acid polypeptide reads, in one-letter code: NADH-quinone oxidoreductase subunit I (180 aa).

2 consecutive 4Fe-4S ferredoxin-type domains span residues 50-80 and 90-119; these read LTRD…LQKT and EFFR…LTPD. 8 residues coordinate [4Fe-4S] cluster: Cys-60, Cys-63, Cys-66, Cys-70, Cys-99, Cys-102, Cys-105, and Cys-109.

This sequence belongs to the complex I 23 kDa subunit family. As to quaternary structure, NDH-1 is composed of 13 different subunits. Subunits NuoA, H, J, K, L, M, N constitute the membrane sector of the complex. [4Fe-4S] cluster is required as a cofactor.

Its subcellular location is the cell inner membrane. The catalysed reaction is a quinone + NADH + 5 H(+)(in) = a quinol + NAD(+) + 4 H(+)(out). NDH-1 shuttles electrons from NADH, via FMN and iron-sulfur (Fe-S) centers, to quinones in the respiratory chain. The immediate electron acceptor for the enzyme in this species is believed to be ubiquinone. Couples the redox reaction to proton translocation (for every two electrons transferred, four hydrogen ions are translocated across the cytoplasmic membrane), and thus conserves the redox energy in a proton gradient. The polypeptide is NADH-quinone oxidoreductase subunit I (Shigella dysenteriae serotype 1 (strain Sd197)).